The following is a 211-amino-acid chain: MHSIAIFGGTFDPVHNGHIKTSLAIQANFGFDSYYFLPCKSPAIKPPSFASSEQRVEMLKLALKPYPDFKIDTRELDRDTPSYMVYTLQSFRQEYTDSSLTLIIGYDGLLNLPQWYQWEKIISLANLLVINREEFFQQPVPKSVQTLLNQYRNDDKNILLNHHAGSICLYNAGHYDISSTKIREQLKQHKDVKSNLPDLVYDYIKKQELYQ.

It belongs to the NadD family.

The enzyme catalyses nicotinate beta-D-ribonucleotide + ATP + H(+) = deamido-NAD(+) + diphosphate. It participates in cofactor biosynthesis; NAD(+) biosynthesis; deamido-NAD(+) from nicotinate D-ribonucleotide: step 1/1. In terms of biological role, catalyzes the reversible adenylation of nicotinate mononucleotide (NaMN) to nicotinic acid adenine dinucleotide (NaAD). This Legionella pneumophila (strain Paris) protein is Probable nicotinate-nucleotide adenylyltransferase.